Consider the following 111-residue polypeptide: MEAKAIAKYVRMSPTKVGVVLDLIRGKNVNEAFAILKYTPRDAAEVISKVLKSAVANAENNHELDANRLFVAEAHVGHGPTLKRFRPMDHGKAFRINKRTSNITLVVKERA.

The protein belongs to the universal ribosomal protein uL22 family. In terms of assembly, part of the 50S ribosomal subunit.

Functionally, this protein binds specifically to 23S rRNA; its binding is stimulated by other ribosomal proteins, e.g. L4, L17, and L20. It is important during the early stages of 50S assembly. It makes multiple contacts with different domains of the 23S rRNA in the assembled 50S subunit and ribosome. Its function is as follows. The globular domain of the protein is located near the polypeptide exit tunnel on the outside of the subunit, while an extended beta-hairpin is found that lines the wall of the exit tunnel in the center of the 70S ribosome. This chain is Large ribosomal subunit protein uL22, found in Clostridium perfringens (strain ATCC 13124 / DSM 756 / JCM 1290 / NCIMB 6125 / NCTC 8237 / Type A).